The sequence spans 193 residues: Ion-translocating oxidoreductase complex subunit B (193 aa).

The interval 1–26 (MSTMLIAVILLTLLALFFGVLLGFAA) is hydrophobic. Positions 32–90 (EGNPIVDELEAILPQTQCGQCGYPGCRPYAEAIANGDKVNKCPPGGTATMEKLASLMGV) constitute a 4Fe-4S domain. [4Fe-4S] cluster-binding residues include C49, C52, C57, C73, C114, C117, C120, C124, C144, C147, C150, and C154. 4Fe-4S ferredoxin-type domains are found at residues 105–134 (KVAY…GAGK) and 136–164 (MHTV…MLPV).

This sequence belongs to the 4Fe4S bacterial-type ferredoxin family. RnfB subfamily. The complex is composed of six subunits: RnfA, RnfB, RnfC, RnfD, RnfE and RnfG. [4Fe-4S] cluster serves as cofactor.

The protein localises to the cell inner membrane. Functionally, part of a membrane-bound complex that couples electron transfer with translocation of ions across the membrane. This Shewanella sp. (strain MR-4) protein is Ion-translocating oxidoreductase complex subunit B.